The primary structure comprises 104 residues: Large ribosomal subunit protein eL30 (104 aa).

Belongs to the eukaryotic ribosomal protein eL30 family.

The protein is Large ribosomal subunit protein eL30 (rpl30e) of Sulfolobus acidocaldarius (strain ATCC 33909 / DSM 639 / JCM 8929 / NBRC 15157 / NCIMB 11770).